A 112-amino-acid chain; its full sequence is Mediator of RNA polymerase II transcription subunit 22 (112 aa).

The segment at 83-112 (KPEDGGEGQLADELLDKIEDTSDGVDKETA) is disordered. The segment covering 96-112 (LLDKIEDTSDGVDKETA) has biased composition (basic and acidic residues).

This sequence belongs to the Mediator complex subunit 22 family. Component of the Mediator complex.

It localises to the nucleus. Functionally, component of the Mediator complex, a coactivator involved in the regulated transcription of nearly all RNA polymerase II-dependent genes. Mediator functions as a bridge to convey information from gene-specific regulatory proteins to the basal RNA polymerase II transcription machinery. Mediator is recruited to promoters by direct interactions with regulatory proteins and serves as a scaffold for the assembly of a functional preinitiation complex with RNA polymerase II and the general transcription factors. This is Mediator of RNA polymerase II transcription subunit 22 (SRB6) from Yarrowia lipolytica (strain CLIB 122 / E 150) (Yeast).